The sequence spans 230 residues: Ubiquitin carboxyl-terminal hydrolase isozyme L3 (230 aa).

The region spanning 5-229 is the UCH catalytic domain; sequence RWLPLEANPE…LRFNAIALSA (225 aa). Residues 8–13 form an interaction with ubiquitin region; sequence PLEANP. C95 serves as the catalytic Nucleophile. Phosphoserine is present on S130. Residues 152–159 are interaction with ubiquitin. Crossover loop which restricts access of large ubiquitin adducts to the active site; sequence AHEGQTEA. Catalysis depends on H169, which acts as the Proton donor. The segment at 219 to 224 is interaction with ubiquitin; it reads ELRFNA.

Belongs to the peptidase C12 family. As to quaternary structure, preferentially binds diubiquitin; the interaction does not hydrolyze diubiquitin but, in vitro, inhibits the hydrolyzing activity on other substrates.

It localises to the cytoplasm. It carries out the reaction Thiol-dependent hydrolysis of ester, thioester, amide, peptide and isopeptide bonds formed by the C-terminal Gly of ubiquitin (a 76-residue protein attached to proteins as an intracellular targeting signal).. Inhibited by monoubiquitin and diubiquitin. Functionally, deubiquitinating enzyme (DUB) that controls levels of cellular ubiquitin through processing of ubiquitin precursors and ubiquitinated proteins. Thiol protease that recognizes and hydrolyzes a peptide bond at the C-terminal glycine of either ubiquitin or NEDD8. Has a 10-fold preference for Arg and Lys at position P3, and exhibits a preference towards 'Lys-48'-linked ubiquitin chains. Deubiquitinates ENAC in apical compartments, thereby regulating apical membrane recycling. Indirectly increases the phosphorylation of IGFIR, AKT and FOXO1 and promotes insulin-signaling and insulin-induced adipogenesis. Required for stress-response retinal, skeletal muscle and germ cell maintenance. May be involved in working memory. Can hydrolyze UBB(+1), a mutated form of ubiquitin which is not effectively degraded by the proteasome. This Sus scrofa (Pig) protein is Ubiquitin carboxyl-terminal hydrolase isozyme L3 (UCHL3).